We begin with the raw amino-acid sequence, 342 residues long: Voltage-gated hydrogen channel 1 (342 aa).

2 disordered regions span residues 1–20 (MEGD…INPN) and 74–102 (FNDN…SEQK). Over 1–148 (MEGDNCNKSR…KLRHILHSKP (148 aa)) the chain is Cytoplasmic. Residues 86–102 (QEQSTQNTMISMQSEQK) are compositionally biased toward polar residues. The chain crosses the membrane as a helical span at residues 149-169 (IHVAIIVLVVLDSFLVVGELL). The Extracellular segment spans residues 170–185 (IDLKVIIVPHGNPAPE). The chain crosses the membrane as a helical span at residues 186 to 208 (ILHGFSLSILSIFMVEIALKIIA). At 209–217 (DHRHFIHHK) the chain is on the cytoplasmic side. A helical membrane pass occupies residues 218–238 (VEVLDAVVVVISFGVDIALIF). Over 239 to 247 (VGESEALAA) the chain is Extracellular. A helical membrane pass occupies residues 248-268 (IGLLVILRLWRVFRIINGIIV). Over 269–342 (TVKTKADDRV…HSTTTASADV (74 aa)) the chain is Cytoplasmic. Residues 271–315 (KTKADDRVHEIKKKNSELELQIHNLEEKLSQKEQDMSRLHEILRC) adopt a coiled-coil conformation.

This sequence belongs to the hydrogen channel family. Homodimer.

The protein localises to the membrane. The protein resides in the cell membrane. With respect to regulation, less sensitive to zinc ions as compared to the mammalian homologs. Functionally, mediates the voltage-dependent proton permeability of excitable membranes. Forms a proton-selective channel through which protons may pass in accordance with their electrochemical gradient. This Ciona intestinalis (Transparent sea squirt) protein is Voltage-gated hydrogen channel 1 (HVCN1).